We begin with the raw amino-acid sequence, 33 residues long: Photosystem II reaction center protein Psb30 (33 aa).

The helical transmembrane segment at 8–28 (QLGSLLLITVAGPLIVFFLFI) threads the bilayer.

This sequence belongs to the Psb30/Ycf12 family. PSII is composed of 1 copy each of membrane proteins PsbA, PsbB, PsbC, PsbD, PsbE, PsbF, PsbH, PsbI, PsbJ, PsbK, PsbL, PsbM, PsbT, PsbY, PsbZ, Psb30/Ycf12, peripheral proteins of the oxygen-evolving complex and a large number of cofactors. It forms dimeric complexes.

It is found in the plastid. The protein resides in the chloroplast thylakoid membrane. In terms of biological role, a core subunit of photosystem II (PSII), probably helps stabilize the reaction center. This is Photosystem II reaction center protein Psb30 from Euglena anabaena (Euglenaria anabaena).